Reading from the N-terminus, the 1052-residue chain is Germline survival defective-1 (1052 aa).

A signal peptide spans 1-25 (MRCLISYLFHSFLIFLKFIRSDVTA). Disordered stretches follow at residues 41-320 (LMKS…DPKN), 478-543 (VNGI…QSVP), 667-689 (PSSQ…EEFE), 933-965 (KQTL…NSYA), and 1033-1052 (SNNT…NSNF). Residues 67–145 (ATATAAATTQ…SSTSSTSQQT (79 aa)) are compositionally biased toward low complexity. Residues 163-172 (TSNTANSQSG) are compositionally biased toward polar residues. Residues 178 to 190 (TNKDRPKEKEKNT) show a composition bias toward basic and acidic residues. Positions 244-279 (NAKSSGFLSNSSLSSAGQISASSAPPVSTTPTAIPI) are enriched in low complexity. Positions 305-320 (KRDEEPMPYKSTDPKN) are enriched in basic and acidic residues. Positions 424-732 (QHPPGLPPLL…QIEKNDNLFS (309 aa)) are gld-4 binding. The span at 480–514 (GISNNIPSDRQQLDSKPNTARGSSGNINQSNTTSP) shows a compositional bias: polar residues. Residues 674–689 (DENDTDSDHESEEEFE) show a composition bias toward acidic residues. The tract at residues 892-1052 (PIELPVNMQP…SGGGNQNSNF (161 aa)) is gld-3 binding. Low complexity predominate over residues 950-963 (EGSQQNGGTSSSNS). Residues 1038-1052 (GVNGNSGGGNQNSNF) are compositionally biased toward gly residues.

Isoform C interacts (via C-terminus) with gld-3 isoform A (via C-terminus) in an RNA-independent manner. Isoform C interacts with gld-4. In terms of tissue distribution, expressed in the germline (at protein level). In the early embryo is expressed in all cells, then becomes gradually restricted to the germ cell lineage and enriches in P granules (at protein level). In adult hermaphrodites, is expressed in the mitotic region, accumulates during early stages of meiotic prophase I and is slightly less abundant in maturing oocytes (at protein level).

It is found in the cytoplasm. It localises to the cytoplasmic granule. Functionally, required maternally for germline survival by forming a maternal complex with gld-3. During hermaphrodite development forms a complex with gld-3 which promotes the sperm/oocyte switch freeing the translational repressor fbf to turn off sperm promoting factors. Required for proper oocyte differentiation and oogenic meiotic arrest. Stimulates the enzymatic activity of gld-4 and together they prevent gld-1 mRNA degradation. In Caenorhabditis elegans, this protein is Germline survival defective-1.